The chain runs to 503 residues: Probable voltage-gated potassium channel subunit kvs-4 (503 aa).

Topologically, residues 1–231 (MNSAIMQGAA…EPASSGKAQA (231 aa)) are cytoplasmic. Positions 217–219 (WNI) match the Required for dendritic localization motif. Residues 232–252 (FAVCSVVFVLISISGLVLGSL) form a helical membrane-spanning segment. The Extracellular segment spans residues 253–275 (PELQVATKQRNNLTGEEFTEMEP). A glycan (N-linked (GlcNAc...) asparagine) is linked at Asn-264. A helical transmembrane segment spans residues 276-296 (MPILGYIEYVCIVWFTMEYGL). The Cytoplasmic segment spans residues 297–313 (KMLVSAERSKTFRQLLN). A helical transmembrane segment spans residues 314 to 334 (IIDLLAILPFIIEMLLLIFGI). The Extracellular portion of the chain corresponds to 335–346 (STEQLRDLKGAF). A helical; Voltage-sensor membrane pass occupies residues 347–366 (LVIRILRVLRVIRVLKLGRY). At 367–383 (SSGLQMFGKTLKASFRQ) the chain is on the cytoplasmic side. The interval 368 to 383 (SGLQMFGKTLKASFRQ) is S4-S5 linker. Residues 384 to 404 (LGMMAMVVMTGVIFFSTLVYF) form a helical membrane-spanning segment. Residues 405-417 (LEKDEPASKFHSI) are Extracellular-facing. An intramembrane region (helical) is located at residues 418-429 (PAACWWCIVTMT). Residues 430–434 (TVGYG) lie within the membrane without spanning it. The short motif at 430–435 (TVGYGD) is the Selectivity filter element. Residues 435–445 (DLTPVTVPGKL) lie on the Extracellular side of the membrane. A helical membrane pass occupies residues 446–466 (VATGAIACGVLVLALPITIIV). At 467-503 (DNFMKVAETERPAGGNRYRTSQYPKATKSEQMILKVT) the chain is on the cytoplasmic side. The Required for dendritic localization motif lies at 496-500 (EQMIL).

It belongs to the potassium channel family. B (Shab) (TC 1.A.1.2) subfamily. Kv2.2/KCNB2 sub-subfamily. In terms of assembly, homotetramer or heterotetramer. Interacts with unc-101 (via N-terminus); which targets kvs-4 to dendrites. Expressed in the cholinergic motor neuron DA9, mechanosensory neurons ALM and PLM, and the interneuron PVPL.

It is found in the cell membrane. The protein resides in the perikaryon. Its subcellular location is the cell projection. It localises to the axon. The protein localises to the dendrite. Functionally, voltage-gated potassium channel that mediates transmembrane potassium transport in excitable membranes. The chain is Probable voltage-gated potassium channel subunit kvs-4 from Caenorhabditis elegans.